The following is a 117-amino-acid chain: Ig lambda-1 chain V region (117 aa).

The N-terminal stretch at 1–20 (MAWISLILSLLALSSGGAIS) is a signal peptide. Position 21 is a pyrrolidone carboxylic acid (Q21). One can recognise an Ig-like domain in the interval 21 to 117 (QAVVTQESAL…YFCALWYSNH (97 aa)).

This is Ig lambda-1 chain V region from Mus musculus (Mouse).